A 744-amino-acid chain; its full sequence is MYLQLLKPTLLRCSTRPSSSGAYTRSPIDQKWAAMAKKAMKGREADTLTWNTPEGIPIKPLYLRSDRDCDAQRSVELPGQFPFTRGPYPTMYTQRPWTIRQYAGFSTVEESNKFYKENIKAGQQGLSVAFDLATHRGYDSDNPRVFGDVGMAGVAVDSVEDMRQLFDGINLEKMSVSMTMNGAVVPVLAMYVVAAEEAGVSRKLLAGTIQNDILKEFMVRNTYIYPPEPSMRIIGDIFAYTSREMPKFNSISISGYHMQEAGADAVLEMAFTIADGIQYCETGLNAGLTIDAFAPRLSFFWGISMNFYMEIAKMRAARRLWANLIKERFSPKSDKSMMLRTHSQTSGWSLTEQDPYNNIIRTTIEAMASVFGGTQSLHTNSFDEALGLPTKFSARIARNTQIIIQEESGICNVADPWGGSYMMESLTDEIYEKALAVIKEIDELGGMAKAVASGMTKLKIEEAAAKKQARIDAGKDVIVGVNKYRLDHEQQVEVLKIDNAKVREEQCAKLNHIRATRDAEKAQKALDAITEGARGNGNLMELAIEAARARCTVGEISDAMEKVFNRHAAVNRLVSGAYKSEFGETSEMSQVLERVKSFADRDGRQPRIMVAKMGQDGHDRGAKVIATGFADLGFDVDVGPLFQTPLEAAQQAVDADVHVIGASSLAAGHLTLIPQLIGELKKLGRPDILVVAGGVIPPQDYKELYDAGVALVFGPGTRLPACANQILEKLEANLPEAPGKAASR.

Positions Gln605–Ala737 constitute a B12-binding domain. His618 contributes to the adenosylcob(III)alamin binding site.

It belongs to the methylmalonyl-CoA mutase family. In terms of assembly, homodimer. It depends on adenosylcob(III)alamin as a cofactor.

The protein resides in the mitochondrion matrix. It carries out the reaction (R)-methylmalonyl-CoA = succinyl-CoA. In terms of biological role, involved, in man, in the degradation of several amino acids, odd-chain fatty acids and cholesterol via propionyl-CoA to the tricarboxylic acid cycle. MCM has different functions in other species. This chain is Probable methylmalonyl-CoA mutase, mitochondrial (mmcm-1), found in Caenorhabditis elegans.